Consider the following 740-residue polypeptide: ATP-dependent zinc metalloprotease YME1L (740 aa).

Topologically, residues 1-256 (MFSTTTHSVP…KSGKTMKYLK (256 aa)) are mitochondrial matrix. A helical membrane pass occupies residues 257–277 (TLQTIVVIVVFLGIFLSFFTT). Residues 278-740 (SNGSVFRSIQ…IKAILNESQT (463 aa)) lie on the Mitochondrial intermembrane side of the membrane. ATP is bound at residue 347–351 (GTGKT). A Zn(2+)-binding site is contributed by H563. Residue E564 is part of the active site. The Zn(2+) site is built by H567 and D641.

This sequence in the N-terminal section; belongs to the AAA ATPase family. The protein in the C-terminal section; belongs to the peptidase M41 family. Zn(2+) is required as a cofactor.

The protein resides in the mitochondrion inner membrane. Functionally, ATP-dependent metalloprotease that catalyzes the degradation of folded and unfolded proteins with a suitable degron sequence in the mitochondrial intermembrane region. Plays an important role in regulating mitochondrial morphology and function by cleaving Opa1, giving rise to a form of Opa1 that promotes maintenance of normal mitochondrial structure and mitochondrial protein metabolism. Ensures cell proliferation, maintains normal cristae morphology and complex I respiration activity, promotes antiapoptotic activity and protects mitochondria from the accumulation of oxidatively damaged membrane proteins. Required to control the accumulation of nonassembled respiratory chain subunits such as ND-30. The polypeptide is ATP-dependent zinc metalloprotease YME1L (Drosophila melanogaster (Fruit fly)).